We begin with the raw amino-acid sequence, 261 residues long: Carnitinyl-CoA dehydratase (261 aa).

Glutamate 111 acts as the Nucleophile in catalysis. Glutamate 131 (proton acceptor) is an active-site residue.

This sequence belongs to the enoyl-CoA hydratase/isomerase family.

It carries out the reaction (R)-carnitinyl-CoA = crotonobetainyl-CoA + H2O. The protein operates within amine and polyamine metabolism; carnitine metabolism. In terms of biological role, catalyzes the reversible dehydration of L-carnitinyl-CoA to crotonobetainyl-CoA. The protein is Carnitinyl-CoA dehydratase of Escherichia coli (strain ATCC 8739 / DSM 1576 / NBRC 3972 / NCIMB 8545 / WDCM 00012 / Crooks).